A 301-amino-acid chain; its full sequence is Ribosomal RNA small subunit methyltransferase H (301 aa).

S-adenosyl-L-methionine contacts are provided by residues 25-27 (GGH), Asp45, Phe72, Asp94, and Gln101.

This sequence belongs to the methyltransferase superfamily. RsmH family.

It is found in the cytoplasm. It catalyses the reaction cytidine(1402) in 16S rRNA + S-adenosyl-L-methionine = N(4)-methylcytidine(1402) in 16S rRNA + S-adenosyl-L-homocysteine + H(+). Functionally, specifically methylates the N4 position of cytidine in position 1402 (C1402) of 16S rRNA. This is Ribosomal RNA small subunit methyltransferase H from Methylococcus capsulatus (strain ATCC 33009 / NCIMB 11132 / Bath).